Consider the following 83-residue polypeptide: RNA-binding protein Hfq (83 aa).

The region spanning 10–70 is the Sm domain; that stretch reads DTFLNQVRKE…ISTVMPLRPI (61 aa).

This sequence belongs to the Hfq family. In terms of assembly, homohexamer.

Functionally, RNA chaperone that binds small regulatory RNA (sRNAs) and mRNAs to facilitate mRNA translational regulation in response to envelope stress, environmental stress and changes in metabolite concentrations. Also binds with high specificity to tRNAs. This chain is RNA-binding protein Hfq, found in Desulfitobacterium hafniense (strain DSM 10664 / DCB-2).